Consider the following 220-residue polypeptide: Deoxyribose-phosphate aldolase (220 aa).

Asp89 serves as the catalytic Proton donor/acceptor. Residue Lys151 is the Schiff-base intermediate with acetaldehyde of the active site. The active-site Proton donor/acceptor is Lys180.

This sequence belongs to the DeoC/FbaB aldolase family. DeoC type 1 subfamily.

The protein resides in the cytoplasm. The catalysed reaction is 2-deoxy-D-ribose 5-phosphate = D-glyceraldehyde 3-phosphate + acetaldehyde. Its pathway is carbohydrate degradation; 2-deoxy-D-ribose 1-phosphate degradation; D-glyceraldehyde 3-phosphate and acetaldehyde from 2-deoxy-alpha-D-ribose 1-phosphate: step 2/2. Functionally, catalyzes a reversible aldol reaction between acetaldehyde and D-glyceraldehyde 3-phosphate to generate 2-deoxy-D-ribose 5-phosphate. The sequence is that of Deoxyribose-phosphate aldolase from Streptococcus pneumoniae serotype 2 (strain D39 / NCTC 7466).